Consider the following 258-residue polypeptide: Acetylglutamate kinase (258 aa).

Residues 44-45 (GG), R66, and N158 each bind substrate. Residues 181–186 (DVSGIL) and 209–211 (IIT) contribute to the ATP site.

Belongs to the acetylglutamate kinase family. ArgB subfamily. As to quaternary structure, homodimer.

It is found in the cytoplasm. The enzyme catalyses N-acetyl-L-glutamate + ATP = N-acetyl-L-glutamyl 5-phosphate + ADP. The protein operates within amino-acid biosynthesis; L-arginine biosynthesis; N(2)-acetyl-L-ornithine from L-glutamate: step 2/4. In terms of biological role, catalyzes the ATP-dependent phosphorylation of N-acetyl-L-glutamate. This Salmonella arizonae (strain ATCC BAA-731 / CDC346-86 / RSK2980) protein is Acetylglutamate kinase.